The chain runs to 870 residues: Radial spoke head 10 homolog B (870 aa).

Positions 1–16 (MVKEKKKADKKGEKSA) are enriched in basic and acidic residues. Positions 1-43 (MVKEKKKADKKGEKSARSPSSLSDNLDFSKQDGNTTRQEMSPA) are disordered. Polar residues predominate over residues 17–39 (RSPSSLSDNLDFSKQDGNTTRQE). MORN repeat units follow at residues 86–108 (YEGE…GGCT), 109–131 (YRGM…DGLK), 132–154 (YEGD…DGSM), 155–177 (YEGE…TQPV), 179–201 (YIGH…QEGT), 204–226 (YEGD…SGNI), 227–249 (YEGQ…TTNE), 251–273 (YTGR…LKRI), 284–306 (YIGE…SGAM), and 307–329 (YDGE…NGRV). Residues 674 to 704 (NKSPSAVMSHESDAAHSDSARSSSSKLELSP) are disordered. The span at 683 to 692 (HESDAAHSDS) shows a compositional bias: basic and acidic residues. Residues 693–703 (ARSSSSKLELS) show a composition bias toward low complexity. The stretch at 784 to 811 (KEKIRADRLRSTAQAQQRKMEDDELEAR) forms a coiled coil. The interval 840 to 870 (VSSSHLILDPPKEDVTVSPSSKTITSKKKKK) is disordered.

Interacts with RSPH6A. Does not appear to be part of the axonemal radial spoke complexes 1 or 2.

It localises to the cytoplasm. The protein localises to the cytoskeleton. It is found in the cilium axoneme. Its subcellular location is the cell projection. The protein resides in the cilium. It localises to the flagellum. Functionally, may function as part of the axonemal radial spoke complex 3 (RS3). Radial spoke complexes are important for ciliary motility. The protein is Radial spoke head 10 homolog B (RSPH10B) of Homo sapiens (Human).